Consider the following 300-residue polypeptide: Ribonuclease HIII (300 aa).

The RNase H type-2 domain occupies 86–300 (RPRLGVDESG…FNEICDSASA (215 aa)). The a divalent metal cation site is built by aspartate 92, glutamate 93, and aspartate 196.

It belongs to the RNase HII family. RnhC subfamily. It depends on Mn(2+) as a cofactor. Requires Mg(2+) as cofactor.

Its subcellular location is the cytoplasm. The enzyme catalyses Endonucleolytic cleavage to 5'-phosphomonoester.. Functionally, endonuclease that specifically degrades the RNA of RNA-DNA hybrids. The protein is Ribonuclease HIII of Chlamydia felis (strain Fe/C-56) (Chlamydophila felis).